Here is a 149-residue protein sequence, read N- to C-terminus: uncharacterized protein (149 aa).

This is an uncharacterized protein from Acanthamoeba polyphaga (Amoeba).